The following is a 492-amino-acid chain: Myocyte-specific enhancer factor 2A (492 aa).

In terms of domain architecture, MADS-box spans 3–57 (RKKIQITRIMDERNRQVTFTKRKFGLMKKAYELSVLCDCEIALIIFNSSNKLFQY). A DNA-binding region (mef2-type) is located at residues 58–86 (ASTDMDKVLLKYTEYNEPHESRTNSDIVE). S59 carries the phosphoserine; by CK2 modification. S98 carries the post-translational modification Phosphoserine. The interval 183-227 (PQATLHRNVSPGAPQRPPSTGSAGGMLSTSDLTVPNGAGSSPVGN) is disordered. A compositionally biased stretch (polar residues) spans 209-227 (LSTSDLTVPNGAGSSPVGN). A Phosphoserine modification is found at S235. The segment at 242–270 (TGANSLGKVMPTKSPPPPGGGSLGMNSRK) is disordered. Residue K249 is modified to N6-acetyllysine. Residue S255 is modified to Phosphoserine. The segment at 266-283 (MNSRKPDLRVVIPPSSKG) is required for interaction with MAPKs. Residues T304 and T311 each carry the phosphothreonine; by MAPK7 and MAPK14 modification. S347 is modified (phosphoserine; by MAPK7). The span at 382–394 (SNLSINTNQNINI) shows a compositional bias: polar residues. Positions 382–492 (SNLSINTNQN…KRMRMDAWVT (111 aa)) are disordered. Residue K395 is modified to N6-acetyllysine; alternate. K395 is covalently cross-linked (Glycyl lysine isopeptide (Lys-Gly) (interchain with G-Cter in SUMO); alternate). S400 is subject to Phosphoserine; by CDK5. The residue at position 407 (T407) is a Phosphothreonine. Pro residues predominate over residues 417-430 (PQPPPPPPQAPQPQ). Residue S438 is modified to Phosphoserine; by MAPK. The segment covering 438–451 (SPVDSLSSSSSSYD) has biased composition (low complexity). Composition is skewed to basic and acidic residues over residues 452–462 (GSDREDPRGDF) and 473–492 (NSED…AWVT).

As to quaternary structure, binds DNA as a homo- or heterodimer. Dimerizes with MEF2D. Interacts with HDAC7. Interacts with PIAS1; the interaction enhances sumoylation. Interacts with HDAC4, HDAC9 and SLC2A4RG. Interacts (via the N-terminal) with MAPK7; the interaction results in the phosphorylation and transcriptional activity of MEF2A. Post-translationally, constitutive phosphorylation on Ser-400 promotes Lys-395 sumoylation thus preventing acetylation at this site. Dephosphorylation on Ser-400 by PPP3CA upon neuron depolarization promotes a switch from sumoylation to acetylation on residue Lys-395 leading to inhibition of dendrite claw differentiation. Phosphorylation on Thr-304 and Thr-311 are the main sites involved in p38 MAPK signaling and activate transcription. Phosphorylated on these sites by MAPK14/p38alpha and MAPK11/p38beta, but not by MAPK13/p38delta nor by MAPK12/p38gamma. Phosphorylation on Ser-400 by CDK5 induced by neurotoxicity inhibits MEF2A transcriptional activation leading to apoptosis of cortical neurons. Phosphorylation on Thr-304, Thr-311 and Ser-347 can be induced by EGF. In terms of processing, sumoylation on Lys-395 is enhanced by PIAS1 and represses transcriptional activity. Phosphorylation on Ser-400 is required for sumoylation. Has no effect on nuclear location nor on DNA binding. Sumoylated with SUMO1 and, to a lesser extent with SUMO2 and SUMO3. PIASx facilitates sumoylation in postsynaptic dendrites in the cerebellar cortex and promotes their morphogenesis. Acetylation on Lys-395 activates transcriptional activity. Acetylated by p300 on several sites in diffentiating myocytes. Acetylation on Lys-4 increases DNA binding and transactivation. Hyperacetylation by p300 leads to enhanced cardiac myocyte growth and heart failure. Post-translationally, proteolytically cleaved in cerebellar granule neurons on several sites by caspase 3 and caspase 7 following neurotoxicity. Preferentially cleaves the CDK5-mediated hyperphosphorylated form which leads to neuron apoptosis and transcriptional inactivation.

The protein localises to the nucleus. Transcriptional activator which binds specifically to the MEF2 element, 5'-YTA[AT](4)TAR-3', found in numerous muscle-specific genes. Also involved in the activation of numerous growth factor- and stress-induced genes. Mediates cellular functions not only in skeletal and cardiac muscle development, but also in neuronal differentiation and survival. Plays diverse roles in the control of cell growth, survival and apoptosis via p38 MAPK signaling in muscle-specific and/or growth factor-related transcription. In cerebellar granule neurons, phosphorylated and sumoylated MEF2A represses transcription of NUR77 promoting synaptic differentiation. Associates with chromatin to the ZNF16 promoter. The sequence is that of Myocyte-specific enhancer factor 2A (MEF2A) from Bos taurus (Bovine).